A 455-amino-acid polypeptide reads, in one-letter code: Killer cell immunoglobulin-like receptor 3DL2 (455 aa).

The signal sequence occupies residues 1 to 21 (MSLTVVSMACVGFFLLQGAWP). Residues 22-340 (LMGGQDKPFL…SKSGICRHLH (319 aa)) lie on the Extracellular side of the membrane. Ig-like C2-type domains lie at 42–102 (GGHV…RPHS), 137–202 (GETV…VPHS), and 237–300 (GENV…FRAL). Cystine bridges form between Cys49-Cys95 and Cys144-Cys195. Residues Asn179, Asn239, Asn273, and Asn306 are each glycosylated (N-linked (GlcNAc...) asparagine). Cys244 and Cys293 are disulfide-bonded. The chain crosses the membrane as a helical span at residues 341-360 (VLIGTSVVIFLFILLLFFLL). The Cytoplasmic portion of the chain corresponds to 361–455 (YRWCSNKKNA…APQSGLEGVF (95 aa)).

This sequence belongs to the immunoglobulin superfamily. In terms of assembly, interacts with peptide-free HLA-F open conformer. As to expression, expressed in astrocytes.

It is found in the cell membrane. Its function is as follows. Receptor on natural killer (NK) cells and T cells for MHC class I molecules. Upon binding of peptide-free HLA-F open conformer, negatively regulates NK and T cell effector functions. Acts as a receptor on astrocytes for HLA-F. Through interaction with HLA-F, may protect motor neurons from astrocyte-induced toxicity. This Homo sapiens (Human) protein is Killer cell immunoglobulin-like receptor 3DL2.